Reading from the N-terminus, the 309-residue chain is Tagatose-6-phosphate kinase (309 aa).

It belongs to the carbohydrate kinase PfkB family. LacC subfamily.

It catalyses the reaction D-tagatofuranose 6-phosphate + ATP = D-tagatofuranose 1,6-bisphosphate + ADP + H(+). Its pathway is carbohydrate metabolism; D-tagatose 6-phosphate degradation; D-glyceraldehyde 3-phosphate and glycerone phosphate from D-tagatose 6-phosphate: step 1/2. This Streptococcus pyogenes serotype M3 (strain SSI-1) protein is Tagatose-6-phosphate kinase.